Consider the following 259-residue polypeptide: Putative protein-disulfide oxidoreductase RBE_1288 (259 aa).

A signal peptide spans 1 to 20 (MRNSFITLIFLLLLSGCSEE). Residues 25–54 (VEQESSESITPAQASTSDENNNQTTETTTP) form a disordered region. A compositionally biased stretch (polar residues) spans 33–42 (ITPAQASTSD). Positions 43 to 54 (ENNNQTTETTTP) are enriched in low complexity. The 205-residue stretch at 47 to 251 (QTTETTTPAV…ISAAIDKAIE (205 aa)) folds into the Thioredoxin domain. Cys104 and Cys107 are oxidised to a cystine.

It belongs to the thioredoxin family. DsbA subfamily.

It localises to the periplasm. In terms of biological role, may be required for disulfide bond formation in some proteins. The chain is Putative protein-disulfide oxidoreductase RBE_1288 from Rickettsia bellii (strain RML369-C).